The following is a 616-amino-acid chain: Elongation factor 4 (616 aa).

Residues 17-203 form the tr-type G domain; sequence ERIRNFCIIA…RVCELVPAPV (187 aa). Residues 29–34 and 150–153 each bind GTP; these read DHGKST and NKID.

The protein belongs to the TRAFAC class translation factor GTPase superfamily. Classic translation factor GTPase family. LepA subfamily.

Its subcellular location is the cell membrane. The enzyme catalyses GTP + H2O = GDP + phosphate + H(+). In terms of biological role, required for accurate and efficient protein synthesis under certain stress conditions. May act as a fidelity factor of the translation reaction, by catalyzing a one-codon backward translocation of tRNAs on improperly translocated ribosomes. Back-translocation proceeds from a post-translocation (POST) complex to a pre-translocation (PRE) complex, thus giving elongation factor G a second chance to translocate the tRNAs correctly. Binds to ribosomes in a GTP-dependent manner. This is Elongation factor 4 from Corynebacterium jeikeium (strain K411).